The chain runs to 62 residues: Conotoxin Im11.9 (62 aa).

Residues 1-22 form the signal peptide; that stretch reads MFRVTSVLLVIVLLNLVVLTNA. 4 disulfides stabilise this stretch: cysteine 23–cysteine 33, cysteine 27–cysteine 38, cysteine 32–cysteine 41, and cysteine 37–cysteine 46. The propeptide occupies 23–49; that stretch reads CHMDCSKMTCCSGICCFYCGRPMCPGT.

This sequence belongs to the conotoxin I2 superfamily. Expressed by the venom duct.

The protein localises to the secreted. In terms of biological role, probable neurotoxin. The sequence is that of Conotoxin Im11.9 from Conus imperialis (Imperial cone).